Reading from the N-terminus, the 271-residue chain is Ribosomal RNA small subunit methyltransferase A (271 aa).

Positions 28, 30, 54, 75, 99, and 117 each coordinate S-adenosyl-L-methionine.

It belongs to the class I-like SAM-binding methyltransferase superfamily. rRNA adenine N(6)-methyltransferase family. RsmA subfamily.

It is found in the cytoplasm. It carries out the reaction adenosine(1518)/adenosine(1519) in 16S rRNA + 4 S-adenosyl-L-methionine = N(6)-dimethyladenosine(1518)/N(6)-dimethyladenosine(1519) in 16S rRNA + 4 S-adenosyl-L-homocysteine + 4 H(+). Specifically dimethylates two adjacent adenosines (A1518 and A1519) in the loop of a conserved hairpin near the 3'-end of 16S rRNA in the 30S particle. May play a critical role in biogenesis of 30S subunits. This chain is Ribosomal RNA small subunit methyltransferase A, found in Thermus thermophilus (strain ATCC 27634 / DSM 579 / HB8).